Consider the following 85-residue polypeptide: Protein 19.2 (85 aa).

In Escherichia coli (Bacteriophage T7), this protein is Protein 19.2.